A 321-amino-acid chain; its full sequence is uncharacterized protein (321 aa).

At 1–6 (MDIIRK) the chain is on the extracellular side. The helical transmembrane segment at 7–29 (ISHFAGQTFGIWVIVFAVLGFSF) threads the bilayer. Residues 30–34 (PSLFT) are Cytoplasmic-facing. The chain crosses the membrane as a helical span at residues 35-57 (WISSYITIFLGIIMFGMGLTLQA). Residues 58–69 (DDFKELVRKPWQ) are Extracellular-facing. The helical transmembrane segment at 70–92 (VIIGVIAQYTIMPLVAFGLAFGL) threads the bilayer. The Cytoplasmic segment spans residues 93 to 97 (HLPAE). A helical transmembrane segment spans residues 98-120 (IAVGVILVGCCPGGTASNVMTFL). Topologically, residues 121-129 (AKGNTALSV) are extracellular. A helical transmembrane segment spans residues 130–150 (AVTTISTLLAPVVTPLLIMLF). At 151-159 (AKEWLPVSP) the chain is on the cytoplasmic side. Residues 160 to 180 (GSLFISILQAVLFPIIAGLIV) form a helical membrane-spanning segment. At 181 to 190 (KMFFRKQVAK) the chain is on the extracellular side. The chain crosses the membrane as a helical span at residues 191 to 211 (AVHALPLVSVIGIVAIVSAVV). The Cytoplasmic portion of the chain corresponds to 212 to 221 (SGNRENLLQS). The helical transmembrane segment at 222 to 242 (GLLIFSVVILHNGIGYLLGFL) threads the bilayer. The Extracellular segment spans residues 243–267 (CAKLLKMDYPSQKAIAIEVGMQNSG). The helical transmembrane segment at 268–288 (LGAALATAHFSPLSAVPSAIF) threads the bilayer. Residues 289 to 321 (SVWHNLSGSMLATYWSKKVKKKQAGSKSSNLSL) are Cytoplasmic-facing.

Belongs to the bile acid:sodium symporter (BASS) (TC 2.A.28) family.

The protein localises to the cell membrane. This is an uncharacterized protein from Bacillus subtilis (strain 168).